Here is a 428-residue protein sequence, read N- to C-terminus: Gamma-glutamyl phosphate reductase (428 aa).

The protein belongs to the gamma-glutamyl phosphate reductase family.

It localises to the cytoplasm. It catalyses the reaction L-glutamate 5-semialdehyde + phosphate + NADP(+) = L-glutamyl 5-phosphate + NADPH + H(+). It functions in the pathway amino-acid biosynthesis; L-proline biosynthesis; L-glutamate 5-semialdehyde from L-glutamate: step 2/2. Functionally, catalyzes the NADPH-dependent reduction of L-glutamate 5-phosphate into L-glutamate 5-semialdehyde and phosphate. The product spontaneously undergoes cyclization to form 1-pyrroline-5-carboxylate. This Agrobacterium fabrum (strain C58 / ATCC 33970) (Agrobacterium tumefaciens (strain C58)) protein is Gamma-glutamyl phosphate reductase.